The sequence spans 480 residues: Alpha-glucosidase (480 aa).

Val4–Asn70 is an NAD(+) binding site. Asp119 and Asn153 together coordinate substrate. Cys174 is a binding site for Mn(2+). His175 (proton donor) is an active-site residue. His203 contributes to the Mn(2+) binding site. Residue Asp260 is the Proton acceptor of the active site.

It belongs to the glycosyl hydrolase 4 family. As to quaternary structure, homodimer. It depends on NAD(+) as a cofactor. Mn(2+) serves as cofactor. Co(2+) is required as a cofactor. Requires Ni(2+) as cofactor.

It catalyses the reaction Hydrolysis of terminal, non-reducing (1-&gt;4)-linked alpha-D-glucose residues with release of alpha-D-glucose.. With respect to regulation, inhibited by Hg(2+) ion and EDTA. Its function is as follows. Alpha-glycosidase with a very broad specificity. Hydrolyzes maltose and other small maltooligosaccharides but is inactive against the polymeric substrate starch. AglA is not specific with respect to the configuration at the C-4 position of its substrates because glycosidic derivatives of D-galactose are also hydrolyzed. Does not cleave beta-glycosidic bonds. The polypeptide is Alpha-glucosidase (aglA) (Thermotoga maritima (strain ATCC 43589 / DSM 3109 / JCM 10099 / NBRC 100826 / MSB8)).